The following is a 253-amino-acid chain: Trans-aconitate 2-methyltransferase (253 aa).

This sequence belongs to the methyltransferase superfamily. Tam family.

It is found in the cytoplasm. It catalyses the reaction trans-aconitate + S-adenosyl-L-methionine = (E)-3-(methoxycarbonyl)pent-2-enedioate + S-adenosyl-L-homocysteine. In terms of biological role, catalyzes the S-adenosylmethionine monomethyl esterification of trans-aconitate. This Klebsiella pneumoniae (strain 342) protein is Trans-aconitate 2-methyltransferase.